The primary structure comprises 409 residues: NADH-quinone oxidoreductase subunit D (409 aa).

It belongs to the complex I 49 kDa subunit family. In terms of assembly, NDH-1 is composed of 14 different subunits. Subunits NuoB, C, D, E, F, and G constitute the peripheral sector of the complex.

Its subcellular location is the cell inner membrane. It carries out the reaction a quinone + NADH + 5 H(+)(in) = a quinol + NAD(+) + 4 H(+)(out). In terms of biological role, NDH-1 shuttles electrons from NADH, via FMN and iron-sulfur (Fe-S) centers, to quinones in the respiratory chain. The immediate electron acceptor for the enzyme in this species is believed to be ubiquinone. Couples the redox reaction to proton translocation (for every two electrons transferred, four hydrogen ions are translocated across the cytoplasmic membrane), and thus conserves the redox energy in a proton gradient. The sequence is that of NADH-quinone oxidoreductase subunit D (nuoD) from Thermus thermophilus (strain ATCC BAA-163 / DSM 7039 / HB27).